We begin with the raw amino-acid sequence, 139 residues long: Putative pre-16S rRNA nuclease (139 aa).

This sequence belongs to the YqgF nuclease family.

It is found in the cytoplasm. Its function is as follows. Could be a nuclease involved in processing of the 5'-end of pre-16S rRNA. The sequence is that of Putative pre-16S rRNA nuclease from Streptococcus pyogenes serotype M3 (strain ATCC BAA-595 / MGAS315).